We begin with the raw amino-acid sequence, 274 residues long: Sulfur carrier protein FdhD (274 aa).

Cys120 functions as the Cysteine persulfide intermediate in the catalytic mechanism.

Belongs to the FdhD family.

The protein resides in the cytoplasm. Its function is as follows. Required for formate dehydrogenase (FDH) activity. Acts as a sulfur carrier protein that transfers sulfur from IscS to the molybdenum cofactor prior to its insertion into FDH. The chain is Sulfur carrier protein FdhD from Burkholderia mallei (strain ATCC 23344).